We begin with the raw amino-acid sequence, 601 residues long: Elongation factor 4 (601 aa).

The tr-type G domain occupies 7 to 189 (SLIRNFSIIA…ALVTRLPPPV (183 aa)). GTP contacts are provided by residues 19-24 (DHGKST) and 136-139 (NKVD).

The protein belongs to the TRAFAC class translation factor GTPase superfamily. Classic translation factor GTPase family. LepA subfamily.

Its subcellular location is the cell inner membrane. It catalyses the reaction GTP + H2O = GDP + phosphate + H(+). Required for accurate and efficient protein synthesis under certain stress conditions. May act as a fidelity factor of the translation reaction, by catalyzing a one-codon backward translocation of tRNAs on improperly translocated ribosomes. Back-translocation proceeds from a post-translocation (POST) complex to a pre-translocation (PRE) complex, thus giving elongation factor G a second chance to translocate the tRNAs correctly. Binds to ribosomes in a GTP-dependent manner. This is Elongation factor 4 from Gluconacetobacter diazotrophicus (strain ATCC 49037 / DSM 5601 / CCUG 37298 / CIP 103539 / LMG 7603 / PAl5).